An 813-amino-acid polypeptide reads, in one-letter code: Probable E3 ubiquitin-protein ligase hulA (813 aa).

Residues 1–109 (MGSNLPAQPN…QMGGDEMLTR (109 aa)) form the C2 domain. Disordered stretches follow at residues 131-235 (NLST…GWER) and 251-351 (RTTT…YFVD). Residues 148–167 (VQSSTSSGLVPQVAPSSSHP) show a composition bias toward polar residues. Residues 188-215 (RVPSTTRPSSTAAPASAAGAAVSNSHGS) are compositionally biased toward low complexity. A WW 1 domain is found at 227–260 (GRLPAGWERREDNLGRTYYVDHNTRTTTWTRPSS). Positions 251-264 (RTTTWTRPSSNYNE) are enriched in polar residues. Basic and acidic residues predominate over residues 265-292 (HAQRSQREANMQLERRAHQSRMLPEDRT). The span at 293 to 307 (GANSPNLPESSQQAH) shows a compositional bias: polar residues. The span at 322–331 (ATGATTAGTG) shows a compositional bias: low complexity. 2 consecutive WW domains span residues 331–364 (GELP…DPRR) and 391–424 (GPLP…DPRL). The HECT domain maps to 480-813 (SASDLKKRLM…VEETLGFGQE (334 aa)). The active-site Glycyl thioester intermediate is the Cys-781.

The protein belongs to the RSP5/NEDD4 family. As to quaternary structure, interacts with creD.

The protein localises to the cytoplasm. The catalysed reaction is S-ubiquitinyl-[E2 ubiquitin-conjugating enzyme]-L-cysteine + [acceptor protein]-L-lysine = [E2 ubiquitin-conjugating enzyme]-L-cysteine + N(6)-ubiquitinyl-[acceptor protein]-L-lysine.. It functions in the pathway protein modification; protein ubiquitination. In terms of biological role, E3 ubiquitin-protein ligase which accepts ubiquitin from an E2 ubiquitin-conjugating enzyme in the form of a thioester and then directly transfers the ubiquitin to targeted substrates. Probably involved in the regulatory network controlling carbon source utilization. This is Probable E3 ubiquitin-protein ligase hulA (hulA) from Aspergillus fumigatus (strain CBS 144.89 / FGSC A1163 / CEA10) (Neosartorya fumigata).